A 179-amino-acid chain; its full sequence is Large ribosomal subunit protein uL5 (179 aa).

It belongs to the universal ribosomal protein uL5 family. Part of the 50S ribosomal subunit; part of the 5S rRNA/L5/L18/L25 subcomplex. Contacts the 5S rRNA and the P site tRNA. Forms a bridge to the 30S subunit in the 70S ribosome.

In terms of biological role, this is one of the proteins that bind and probably mediate the attachment of the 5S RNA into the large ribosomal subunit, where it forms part of the central protuberance. In the 70S ribosome it contacts protein S13 of the 30S subunit (bridge B1b), connecting the 2 subunits; this bridge is implicated in subunit movement. Contacts the P site tRNA; the 5S rRNA and some of its associated proteins might help stabilize positioning of ribosome-bound tRNAs. The polypeptide is Large ribosomal subunit protein uL5 (Acidovorax ebreus (strain TPSY) (Diaphorobacter sp. (strain TPSY))).